A 413-amino-acid chain; its full sequence is Histidine--tRNA ligase (413 aa).

This sequence belongs to the class-II aminoacyl-tRNA synthetase family. As to quaternary structure, homodimer.

Its subcellular location is the cytoplasm. The enzyme catalyses tRNA(His) + L-histidine + ATP = L-histidyl-tRNA(His) + AMP + diphosphate + H(+). The protein is Histidine--tRNA ligase of Wolbachia sp. subsp. Brugia malayi (strain TRS).